The primary structure comprises 447 residues: NADP-specific glutamate dehydrogenase (447 aa).

3 residues coordinate substrate: Lys-92, Gln-113, and Lys-116. Lys-128 (proton donor) is an active-site residue. A substrate-binding site is contributed by Gly-167. Residues Thr-212 and Asn-243 each contribute to the NADP(+) site. Substrate is bound at residue Ser-379.

It belongs to the Glu/Leu/Phe/Val dehydrogenases family. As to quaternary structure, homohexamer.

It carries out the reaction L-glutamate + NADP(+) + H2O = 2-oxoglutarate + NH4(+) + NADPH + H(+). Functionally, catalyzes the reversible oxidative deamination of glutamate to alpha-ketoglutarate and ammonia. This is NADP-specific glutamate dehydrogenase (gdh) from Corynebacterium glutamicum (strain ATCC 13032 / DSM 20300 / JCM 1318 / BCRC 11384 / CCUG 27702 / LMG 3730 / NBRC 12168 / NCIMB 10025 / NRRL B-2784 / 534).